The chain runs to 615 residues: Medium-chain acyl-CoA ligase ACSF2, mitochondrial (615 aa).

The N-terminal 42 residues, 1–42, are a transit peptide targeting the mitochondrion; sequence MAVYVGMLRVARLCARSPRVLGARVGLSRVWQEARLWGVRPL. Lys179 bears the N6-acetyllysine mark. N6-acetyllysine; alternate is present on Lys182. Lys182 bears the N6-succinyllysine; alternate mark. At Lys199 the chain carries N6-acetyllysine. 263–271 contacts ATP; that stretch reads TSGTTGSPK. An N6-acetyllysine mark is found at Lys340 and Lys398. Residue Lys478 is modified to N6-succinyllysine. Residues Asp493 and Arg508 each contribute to the ATP site. Lys510 carries the N6-acetyllysine modification. 2 positions are modified to N6-acetyllysine; alternate: Lys544 and Lys570. An N6-succinyllysine; alternate mark is found at Lys544 and Lys570. Lys599 is a binding site for ATP. N6-succinyllysine is present on Lys599.

It belongs to the ATP-dependent AMP-binding enzyme family.

Its subcellular location is the mitochondrion. It carries out the reaction a medium-chain fatty acid + ATP + CoA = a medium-chain fatty acyl-CoA + AMP + diphosphate. The enzyme catalyses octanoate + ATP + CoA = octanoyl-CoA + AMP + diphosphate. Functionally, acyl-CoA synthases catalyze the initial reaction in fatty acid metabolism, by forming a thioester with CoA. Has some preference toward medium-chain substrates. Plays a role in adipocyte differentiation. This chain is Medium-chain acyl-CoA ligase ACSF2, mitochondrial, found in Bos taurus (Bovine).